A 378-amino-acid polypeptide reads, in one-letter code: Stimulator of interferon genes protein (378 aa).

Over 1 to 17 the chain is Cytoplasmic; the sequence is MPYSSLHPSIPQPRGLR. Positions 1-190 are mediates interaction with ZDHHC1 and ZDHHC11; the sequence is MPYSSLHPSI…AYNQRHKNVL (190 aa). A helical membrane pass occupies residues 18-34; it reads AQVAALVLLGACLVALW. Residues 35–44 are Lumenal-facing; it reads GLGELPEYTL. The helical transmembrane segment at 45–69 threads the bilayer; that stretch reads RWLVLHLASQQIGLLVKGLCSLAEE. Topologically, residues 70 to 91 are cytoplasmic; sequence LCHVHSRYQSSYWRAARACLGC. 2 S-palmitoyl cysteine lipidation sites follow: C88 and C91. The chain crosses the membrane as a helical span at residues 92–106; the sequence is PIRCGALLLLSCYFY. Residues 107-116 lie on the Lumenal side of the membrane; sequence FSIRDKAGLP. A helical transmembrane segment spans residues 117–134; the sequence is LPWMLALLGLSQALNILL. The Cytoplasmic portion of the chain corresponds to 135-378; sequence GLQHLAPAEV…QPLPLRSDIF (244 aa). K150 participates in a covalent cross-link: Glycyl lysine isopeptide (Lys-Gly) (interchain with G-Cter in ubiquitin). A cyclic dinucleotide-binding domain (CBD) region spans residues 153 to 339; that stretch reads FNVAHGLAWS…LRHLRQEERE (187 aa). 2',3'-cGAMP contacts are provided by S162 and Y167. Residues S162 and Y167 each contribute to the 3',3'-c-di-GMP site. Y167 contacts 2',3'-cUAMP. A Glycyl lysine isopeptide (Lys-Gly) (interchain with G-Cter in ubiquitin) cross-link involves residue K236. 2',3'-cGAMP contacts are provided by R238 and T263. 2',3'-cUAMP is bound by residues R238 and T263. Residues 238-241 and T263 each bind 3',3'-c-di-GMP; that span reads RVYT. The tract at residues 339–378 is C-terminal tail (CTT); that stretch reads EVTMGSAETSVVPTSSTLSQEPELLISGMEQPLPLRSDIF. S354 carries the post-translational modification Phosphoserine. The residue at position 355 (T355) is a Phosphothreonine. Residues S357 and S365 each carry the phosphoserine; by TBK1 modification. A pLxIS motif motif is present at residues 362 to 365; sequence LLIS.

It belongs to the STING family. Homodimer; forms a homodimer in absence of cyclic nucleotide (c-di-GMP or cGAMP); 'Lys-63'-linked ubiquitination at Lys-150 is required for homodimerization. Homotetramer; in presence of cyclic nucleotide (c-di-GMP or cGAMP), forms tetramers and higher-order oligomers through side-by-side packing. Interacts (when phosphorylated) with IRF3; following activation and phosphorylation on the pLxIS motif by TBK1, recruits IRF3. Interacts with DDX58/RIG-I, MAVS and SSR2. Interacts with RNF5 and TRIM56. Interacts with TBK1; when homodimer, leading to subsequent production of IFN-beta. Interacts with IFIT1 and IFIT2. Interacts with TRIM29; this interaction induces STING1 ubiquitination and subsequent degradation. Associates with the MHC-II complex. Interacts with STEEP1; interaction takes place upon cGAMP-activation and STING1 phosphorylation by MAP3K7/TAK1 and promotes STING1 translocation to COPII vesicles. Interacts with SEC24A, SEC24B and SEC24C; promoting translocation to COPII vesicles. Interacts (when ubiquitinated) with SQSTM1; leading to relocalization to autophagosomes. Interacts with SURF4. Interacts with HNRNPA2B1. Interacts with ZDHHC1; ZDHHC1 constitutively interacts with STING1 and in presence of DNA viruses activates it by promoting its cGAMP-induced oligomerization and the recruitment of downstream signaling components. Interacts with ZDHHC11; in presence of DNA viruses promotes the recruitment of IRF3 to STING1. Interacts with TOMM70. Interacts with TAB1; promoting recruitment of TAB1 to the endoplasmic reticulum membrane and subsequent activation of MAP3K7/TAK1. Interacts (via transmembrane domain) with TMEM203. Interacts with DDX41. As to quaternary structure, (Microbial infection) Interacts with African swine fever virus/ASFV protein A528R; this interaction mediates STING1 degradation. In terms of assembly, (Microbial infection) Interacts with African swine fever virus/ASFV minor capsid protein p17. (Microbial infection) Interacts with Pseudorabies virus protein UL13; this interaction mediates STING1 degradation in a RNF5-dependent manner. Post-translationally, phosphorylation by TBK1 leads to activation and production of IFN-beta. Following cyclic nucleotide (c-di-GMP or cGAMP)-binding, activation and translocation from the endoplasmic reticulum, STING1 is phosphorylated by TBK1 at Ser-365 in the pLxIS motif. The phosphorylated pLxIS motif constitutes an IRF3-binding motif, leading to recruitment of the transcription factor IRF3 to induce type-I interferons and other cytokines. Phosphorylated on tyrosine residues upon MHC-II aggregation. Dephosphorylation by PPP6C leads to inactivation and decreased production of IFN-beta. Phosphorylation at Ser-357 is also required to activate IRF3. Phosphorylation at Ser-354 by MAP3K7/TAK1 facilitates its interaction with STEEP1, promoting STING1 translocation to COPII vesicles. Ubiquitinated. Ubiquitinated via 'Lys-63'-linked ubiquitin chains in response to double-stranded DNA treatment, leading to relocalization to autophagosomes and subsequent degradation; this process is dependent on SQSTM1. 'Lys-63'-linked ubiquitination mediated by TRIM56 at Lys-150 promotes homodimerization and recruitment of the antiviral kinase TBK1 and subsequent production of IFN-beta. 'Lys-48'-linked polyubiquitination at Lys-150 occurring after viral infection is mediated by RNF5 and leads to proteasomal degradation. 'Lys-11'-linked polyubiquitination at Lys-150 by RNF26 leads to stabilize STING1: it protects STING1 from RNF5-mediated 'Lys-48'-linked polyubiquitination. 'Lys-33'-linked and 'Lys-48'-linked deubiquitinated by USP20; leading to its stabilization and promotion of innate antiviral response. 'Lys-48'-linked deubiquitinated by USP44; leading to its stabilization and promotion of innate antiviral response. Deubiquitinated by USP13; leading to inhibition of innate antiviral response. 'Lys-63'-linked deubiquitinated by USP49; leading to inhibition of the subsequent recruitment of TBK1 to the signaling complex. 'Lys-63'-linked ubiquitination mediated by RNF39 promotes the activation of the cGAS-STING pathway. In terms of processing, palmitoylation takes place in the Golgi apparatus and creates a platform for the recruitment of TBK1. Expressed at higher level in the spleen, lymph node, lung and bone marrow, followed by the small intestine, heart, liver and brain, and to a lesser extent in the stomach and kidney.

The protein resides in the endoplasmic reticulum membrane. The protein localises to the cytoplasm. It is found in the perinuclear region. It localises to the endoplasmic reticulum-Golgi intermediate compartment membrane. Its subcellular location is the golgi apparatus membrane. The protein resides in the cytoplasmic vesicle. The protein localises to the autophagosome membrane. It is found in the mitochondrion outer membrane. It localises to the cell membrane. It catalyses the reaction H(+)(in) = H(+)(out). Its function is as follows. Facilitator of innate immune signaling that acts as a sensor of cytosolic DNA from bacteria and viruses and promotes the production of type I interferon (IFN-alpha and IFN-beta). Innate immune response is triggered in response to non-CpG double-stranded DNA from viruses and bacteria delivered to the cytoplasm. Acts by binding cyclic dinucleotides: recognizes and binds cyclic di-GMP (c-di-GMP), a second messenger produced by bacteria, cyclic UMP-AMP (2',3'-cUAMP), and cyclic GMP-AMP (cGAMP), a messenger produced by CGAS in response to DNA virus in the cytosol. Upon binding to c-di-GMP, cUAMP or cGAMP, STING1 oligomerizes, translocates from the endoplasmic reticulum and is phosphorylated by TBK1 on the pLxIS motif, leading to recruitment and subsequent activation of the transcription factor IRF3 to induce expression of type I interferon and exert a potent anti-viral state. Exhibits 2',3' phosphodiester linkage-specific ligand recognition: can bind both 2'-3' linked cGAMP (2'-3'-cGAMP) and 3'-3' linked cGAMP but is preferentially activated by 2'-3' linked cGAMP. The preference for 2'-3'-cGAMP, compared to other linkage isomers is probably due to the ligand itself, whichs adopts an organized free-ligand conformation that resembles the STING1-bound conformation and pays low energy costs in changing into the active conformation. In addition to promote the production of type I interferons, plays a direct role in autophagy. Following cGAMP-binding, STING1 buds from the endoplasmic reticulum into COPII vesicles, which then form the endoplasmic reticulum-Golgi intermediate compartment (ERGIC). The ERGIC serves as the membrane source for WIPI2 recruitment and LC3 lipidation, leading to formation of autophagosomes that target cytosolic DNA or DNA viruses for degradation by the lysosome. Promotes autophagy by acting as a proton channel that directs proton efflux from the Golgi to facilitate MAP1LC3B/LC3B lipidation. The autophagy- and interferon-inducing activities can be uncoupled and autophagy induction is independent of TBK1 phosphorylation. Autophagy is also triggered upon infection by bacteria: following c-di-GMP-binding, which is produced by live Gram-positive bacteria, promotes reticulophagy. May be involved in translocon function, the translocon possibly being able to influence the induction of type I interferons. May be involved in transduction of apoptotic signals via its association with the major histocompatibility complex class II (MHC-II). This is Stimulator of interferon genes protein from Sus scrofa (Pig).